An 82-amino-acid polypeptide reads, in one-letter code: Large ribosomal subunit protein bL28 (82 aa).

The protein belongs to the bacterial ribosomal protein bL28 family.

This is Large ribosomal subunit protein bL28 from Vesicomyosocius okutanii subsp. Calyptogena okutanii (strain HA).